Consider the following 1626-residue polypeptide: Collagen alpha-1(XXII) chain (1626 aa).

An N-terminal signal peptide occupies residues 1 to 27 (MAGLRGNAVAGLLWMLLLWSGGGGCQA). The 176-residue stretch at 38-213 (DLVFLLDTSS…NAIDKIRGKL (176 aa)) folds into the VWFA domain. Positions 239-427 (GTKEITGFDL…LQRIVIYCDS (189 aa)) constitute a Laminin G-like domain. An N-linked (GlcNAc...) asparagine glycan is attached at Asn-375. 16 Collagen-like domains span residues 481 to 520 (GEKGEMGVAGPMGLPGPKGDIGAIGPVGAPGPKGEKGDVG), 526 to 565 (QGEKGEKGSLGLPGPPGRDGSKGMRGEPGELGEPGLPGEV), 566 to 625 (GMRG…PGPS), 657 to 708 (GEQG…GIPG), 714 to 773 (GPPG…PGER), 774 to 833 (GEDG…PGLK), 868 to 922 (GPKG…GAPG), 925 to 984 (GAPG…PGKG), 1047 to 1095 (AGPP…PGKP), 1118 to 1155 (PPGPPGLPGLPGFKGDKGVPGKPGREGTEGKKGEAGPP), 1156 to 1215 (GLPG…AGPP), 1249 to 1308 (GKPG…PGKD), 1315 to 1374 (GPQG…PGEK), 1387 to 1446 (GEPG…PGPP), 1495 to 1550 (SQGR…PGAP), and 1575 to 1604 (DGLPGIPGPQGETGPAGHPGLPGPPGPPGQ). Disordered stretches follow at residues 506–1002 (PVGA…GPLG), 1019–1103 (GGQC…LLSP), 1119–1458 (PGPP…RGES), and 1491–1609 (YMKS…DPSQ). Positions 544–553 (DGSKGMRGEP) are enriched in basic and acidic residues. Pro residues predominate over residues 571–580 (QGPPGLPGPP). Positions 591–606 (ERGEKGTRGEKGERGL) are enriched in basic and acidic residues. Residues 661 to 670 (APGPRGHQGA) are compositionally biased toward low complexity. 2 stretches are compositionally biased toward pro residues: residues 715 to 728 (PPGPPGVPGPPGPG) and 742 to 751 (KPGPPGPTGP). Basic and acidic residues-rich tracts occupy residues 769–778 (EPGERGEDGL) and 815–826 (RGEKGDQGEKGE). Residues 908–939 (AHGAPGAAGNPGAPGHVGAPGPSGPPGSVGAP) show a composition bias toward low complexity. Residues 945–957 (PGKDGERGEKGAA) show a composition bias toward basic and acidic residues. Low complexity-rich tracts occupy residues 959-974 (EEGSPGPVGPRGDPGA) and 1056-1065 (PGDKGSPGSR). Composition is skewed to basic and acidic residues over residues 1131 to 1151 (KGDKGVPGKPGREGTEGKKGE) and 1173 to 1185 (RGADGEVGQKGDQ). The segment covering 1205–1223 (ADGIAGAAGPPGIQGSPGK) has biased composition (low complexity). Residues 1241–1250 (EEGKEGRDGK) are compositionally biased toward basic and acidic residues. Positions 1260 to 1275 (AGEPGLPGPEGARGPP) are enriched in low complexity. Residues 1379–1389 (KEGVPGKPGEP) show a composition bias toward low complexity. Residues 1391 to 1404 (FKGERGDPGIKGDK) show a composition bias toward basic and acidic residues. The segment covering 1405-1414 (GPPGGKGQPG) has biased composition (gly residues). The segment covering 1440 to 1449 (VGPPGPPGQP) has biased composition (pro residues). The segment covering 1521–1530 (GRPGQGGLEG) has biased composition (gly residues). A compositionally biased stretch (pro residues) spans 1595-1604 (LPGPPGPPGQ).

Belongs to the fibril-associated collagens with interrupted helices (FACIT) family. In terms of tissue distribution, restrictive expression is observed at tissue junctions such as the myotendinous junction in skeletal and heart muscle, the articular cartilage-synovial fluid junction, or the border between the anagen hair follicle and the dermis in the skin. It is deposited in the basement membrane zone of the myotendinous junction and the hair follicle and associated with the extrafibrillar matrix in cartilage.

Its subcellular location is the secreted. The protein localises to the extracellular space. It is found in the extracellular matrix. It localises to the cytoplasm. Its function is as follows. Acts as a cell adhesion ligand for skin epithelial cells and fibroblasts. This Homo sapiens (Human) protein is Collagen alpha-1(XXII) chain (COL22A1).